Consider the following 104-residue polypeptide: Type VII secretion system extracellular protein B (104 aa).

It belongs to the WXG100 family. Homodimer. When mixed with EsxA does not form heterodimers.

It localises to the secreted. Its function is as follows. Virulence factor that is important for the establishment of infection in the host. EsxB is required for EsxA synthesis as well as secretion. Mediates together with EsxA the release of S.aureus from the host cell. Also inhibits host cytokine production and thus modulates dendritic cell-mediated immunity. This chain is Type VII secretion system extracellular protein B, found in Staphylococcus aureus (strain Mu50 / ATCC 700699).